Here is a 100-residue protein sequence, read N- to C-terminus: RxLR effector protein Avrblb2 (100 aa).

An N-terminal signal peptide occupies residues 1–22 (MRSFLYGVLAFAVLARSSAVAA). The RxLR-dEER signature appears at 43–57 (RSLRIEAQEVIQSGR). The Calmodulin-binding motif motif lies at 78 to 82 (RPDIK).

The protein belongs to the RxLR effector family. In terms of assembly, interacts with the host papain-like cysteine protease C14. Interacts with the host calmodulin.

It localises to the secreted. It is found in the host cell membrane. Functionally, secreted effector that acts as an elicitor of hypersensitive response (HR) specifically on plants carrying defense protein Rpi-blb2. Enhances P.infestans colonization of Nicotiana benthamiana leaves. Interacts with, and subsequently prevents secretion into the apoplast of the host papain-like cysteine protease C14, thus promoting virulence by interfering with the execution of host defenses. Associates with calmodulin at the host plasma membrane to interfere with plant defense-associated calcium signaling in hosts. The polypeptide is RxLR effector protein Avrblb2 (Phytophthora infestans (strain T30-4) (Potato late blight agent)).